A 115-amino-acid chain; its full sequence is Viral Lymphotactin (115 aa).

Positions 1 to 19 (MRLLTILALCCVAIWVVES) are cleaved as a signal peptide. C30 and C67 are disulfide-bonded.

Belongs to the intercrine gamma family. As to quaternary structure, interacts with host XCR1. Post-translationally, N-glycosylated and O-glycosylated.

It localises to the secreted. Chemoattractant for CD4-dendritic cells, but not for CD4+ dendritic cells, T-cells or B-cells. The chain is Viral Lymphotactin (vXCL1) from Rat cytomegalovirus (isolate England) (RCMV-E).